The sequence spans 394 residues: Chalcone synthase 8 (394 aa).

The active site involves Cys-165.

This sequence belongs to the thiolase-like superfamily. Chalcone/stilbene synthases family.

It carries out the reaction (E)-4-coumaroyl-CoA + 3 malonyl-CoA + 3 H(+) = 2',4,4',6'-tetrahydroxychalcone + 3 CO2 + 4 CoA. It participates in secondary metabolite biosynthesis; flavonoid biosynthesis. Functionally, the primary product of this enzyme is 4,2',4',6'-tetrahydroxychalcone (also termed naringenin-chalcone or chalcone) which can under specific conditions spontaneously isomerize into naringenin. This chain is Chalcone synthase 8 (CHS8), found in Bromheadia finlaysoniana (Orchid).